Reading from the N-terminus, the 185-residue chain is Probable dehydrin LEA (185 aa).

2 stretches are compositionally biased toward basic and acidic residues: residues 1 to 10 (MADLRDEKGN) and 44 to 55 (QHKESTTSDIAE). Residues 1–185 (MADLRDEKGN…LPGHHNHNHP (185 aa)) form a disordered region. A compositionally biased stretch (low complexity) spans 67–94 (AAAPAGAGAATAATATGVSAGTGATTTG). Positions 130–146 (KEKIKEKFGSGKHKDEQ) are enriched in basic and acidic residues. A compositionally biased stretch (low complexity) spans 147 to 159 (TPATATTTGPATT). Residues 161–177 (QPHEKKGILEKIKDKLP) show a composition bias toward basic and acidic residues.

It belongs to the plant dehydrin family.

The chain is Probable dehydrin LEA (LEA) from Arabidopsis thaliana (Mouse-ear cress).